The following is a 151-amino-acid chain: Arginine repressor (151 aa).

Belongs to the ArgR family.

Its subcellular location is the cytoplasm. It functions in the pathway amino-acid biosynthesis; L-arginine biosynthesis [regulation]. Functionally, regulates arginine biosynthesis genes. The protein is Arginine repressor of Heliobacterium modesticaldum (strain ATCC 51547 / Ice1).